We begin with the raw amino-acid sequence, 458 residues long: Transcription factor bHLH10 (458 aa).

The tract at residues 1 to 49 is disordered; sequence MEEERESLYEEMGCFDPNTPAEVTVESSFSQAEPPPPPPQVLVAGSTSN. One can recognise a bHLH domain in the interval 243–292; that stretch reads SRKSRTSPTERERRVHFNDRFFDLKNLIPNPTKIDRASIVGEAIDYIKEL. The tract at residues 315–338 is disordered; sequence KRARVGEGGGGEDQEEEEDTVNYK. Residues 324–334 are compositionally biased toward acidic residues; that stretch reads GGEDQEEEEDT.

In terms of assembly, homodimer.

It localises to the nucleus. The protein is Transcription factor bHLH10 (BHLH10) of Arabidopsis thaliana (Mouse-ear cress).